The primary structure comprises 265 residues: Cytochrome c oxidase subunit 3 (265 aa).

The next 6 helical transmembrane spans lie at 16-36 (PWPI…VMYM), 41-61 (GGAT…FVWW), 84-104 (YGSI…FWAS), 162-182 (AVYA…FQGM), 200-220 (FLLA…FLIV), and 242-262 (AWYW…IYWW).

The protein belongs to the cytochrome c oxidase subunit 3 family. Component of the cytochrome c oxidase (complex IV, CIV), a multisubunit enzyme composed of a catalytic core of 3 subunits and several supernumerary subunits. The complex exists as a monomer or a dimer and forms supercomplexes (SCs) in the inner mitochondrial membrane with ubiquinol-cytochrome c oxidoreductase (cytochrome b-c1 complex, complex III, CIII).

It is found in the mitochondrion inner membrane. It catalyses the reaction 4 Fe(II)-[cytochrome c] + O2 + 8 H(+)(in) = 4 Fe(III)-[cytochrome c] + 2 H2O + 4 H(+)(out). Its function is as follows. Component of the cytochrome c oxidase, the last enzyme in the mitochondrial electron transport chain which drives oxidative phosphorylation. The respiratory chain contains 3 multisubunit complexes succinate dehydrogenase (complex II, CII), ubiquinol-cytochrome c oxidoreductase (cytochrome b-c1 complex, complex III, CIII) and cytochrome c oxidase (complex IV, CIV), that cooperate to transfer electrons derived from NADH and succinate to molecular oxygen, creating an electrochemical gradient over the inner membrane that drives transmembrane transport and the ATP synthase. Cytochrome c oxidase is the component of the respiratory chain that catalyzes the reduction of oxygen to water. Electrons originating from reduced cytochrome c in the intermembrane space (IMS) are transferred via the dinuclear copper A center (CU(A)) of subunit 2 and heme A of subunit 1 to the active site in subunit 1, a binuclear center (BNC) formed by heme A3 and copper B (CU(B)). The BNC reduces molecular oxygen to 2 water molecules using 4 electrons from cytochrome c in the IMS and 4 protons from the mitochondrial matrix. The polypeptide is Cytochrome c oxidase subunit 3 (COX3) (Zea mays (Maize)).